We begin with the raw amino-acid sequence, 193 residues long: Erythropoietin (193 aa).

Positions 1–27 (MGVHECPAWLWLLLSLLSLPLGLPVLG) are cleaved as a signal peptide. 2 disulfides stabilise this stretch: C34/C188 and C56/C60. The N-linked (GlcNAc...) asparagine glycan is linked to N51. N65 and N110 each carry an N-linked (GlcNAc...) asparagine glycan. An O-linked (GalNAc...) serine glycan is attached at S153.

The protein belongs to the EPO/TPO family. Produced by kidney or liver of adult mammals and by liver of fetal or neonatal mammals.

The protein localises to the secreted. Its function is as follows. Hormone involved in the regulation of erythrocyte proliferation and differentiation and the maintenance of a physiological level of circulating erythrocyte mass. Binds to EPOR leading to EPOR dimerization and JAK2 activation thereby activating specific downstream effectors, including STAT1 and STAT3. This chain is Erythropoietin (EPO), found in Homo sapiens (Human).